Reading from the N-terminus, the 240-residue chain is Ubiquinone biosynthesis O-methyltransferase (240 aa).

S-adenosyl-L-methionine-binding residues include arginine 44, glycine 64, aspartate 85, and methionine 129.

This sequence belongs to the methyltransferase superfamily. UbiG/COQ3 family.

The catalysed reaction is a 3-demethylubiquinol + S-adenosyl-L-methionine = a ubiquinol + S-adenosyl-L-homocysteine + H(+). It catalyses the reaction a 3-(all-trans-polyprenyl)benzene-1,2-diol + S-adenosyl-L-methionine = a 2-methoxy-6-(all-trans-polyprenyl)phenol + S-adenosyl-L-homocysteine + H(+). It functions in the pathway cofactor biosynthesis; ubiquinone biosynthesis. Functionally, O-methyltransferase that catalyzes the 2 O-methylation steps in the ubiquinone biosynthetic pathway. In Escherichia coli O7:K1 (strain IAI39 / ExPEC), this protein is Ubiquinone biosynthesis O-methyltransferase.